Reading from the N-terminus, the 1290-residue chain is DNA-directed RNA polymerase subunit beta' (1290 aa).

Zn(2+) contacts are provided by Cys-60, Cys-62, Cys-75, and Cys-78. Mg(2+) is bound by residues Asp-535, Asp-537, and Asp-539. The Zn(2+) site is built by Cys-875, Cys-953, Cys-960, and Cys-963.

It belongs to the RNA polymerase beta' chain family. The RNAP catalytic core consists of 2 alpha, 1 beta, 1 beta' and 1 omega subunit. When a sigma factor is associated with the core the holoenzyme is formed, which can initiate transcription. Requires Mg(2+) as cofactor. Zn(2+) is required as a cofactor.

The catalysed reaction is RNA(n) + a ribonucleoside 5'-triphosphate = RNA(n+1) + diphosphate. In terms of biological role, DNA-dependent RNA polymerase catalyzes the transcription of DNA into RNA using the four ribonucleoside triphosphates as substrates. This is DNA-directed RNA polymerase subunit beta' from Nocardioides sp. (strain ATCC BAA-499 / JS614).